A 267-amino-acid chain; its full sequence is 5'-methylthioadenosine nucleosidase (267 aa).

Glu-38 (proton acceptor) is an active-site residue. Residues Thr-116, Lys-199–Glu-202, and Asp-225 contribute to the S-methyl-5'-thioadenosine site. Adenine contacts are provided by Lys-199 and Asp-225. Asp-225 acts as the Proton donor in catalysis.

The protein belongs to the PNP/UDP phosphorylase family. MtnN subfamily. As to quaternary structure, homodimer. Interacts with CBL3 in a calcium-dependent manner. As to expression, expressed in roots, leaves, stems, cauline leaves and flowers.

It catalyses the reaction S-methyl-5'-thioadenosine + H2O = 5-(methylsulfanyl)-D-ribose + adenine. It participates in amino-acid biosynthesis; L-methionine biosynthesis via salvage pathway; S-methyl-5-thio-alpha-D-ribose 1-phosphate from S-methyl-5'-thioadenosine (hydrolase route): step 1/2. Inhibited by CBL3 in a calcium-dependent manner. Inhibited by 5'-methylthiotubercidin (MTT) and by formycin A (FMA). In terms of biological role, enzyme of the methionine cycle that catalyzes the irreversible cleavage of the glycosidic bond in 5'-methylthioadenosine (MTA) to adenine and 5'-methylthioribose. Contributes to the maintenance of AdoMet homeostasis and is required to sustain high rates of ethylene synthesis. Inactive towards S-adenosylhomocysteine (SAH/AdoHcy). The polypeptide is 5'-methylthioadenosine nucleosidase (MTN1) (Arabidopsis thaliana (Mouse-ear cress)).